The chain runs to 129 residues: UPF0102 protein CT2262 (129 aa).

This sequence belongs to the UPF0102 family.

The chain is UPF0102 protein CT2262 from Chlorobaculum tepidum (strain ATCC 49652 / DSM 12025 / NBRC 103806 / TLS) (Chlorobium tepidum).